Reading from the N-terminus, the 979-residue chain is Oncostatin-M-specific receptor subunit beta (979 aa).

A signal peptide spans 1–27; sequence MALFAVFQTTFFLTLLSLRTYQSEVLA. Residues 28–740 are Extracellular-facing; sequence ERLPLTPVSL…VTTPDEHSSM (713 aa). Asn163 is a glycosylation site (N-linked (GlcNAc...) asparagine). An intrachain disulfide couples Cys245 to Cys255. N-linked (GlcNAc...) asparagine glycans are attached at residues Asn326 and Asn380. Fibronectin type-III domains lie at 335–428, 433–528, 529–623, and 625–736; these read NPFS…TLEA, APDV…DPEN, KEVE…SQEL, and PSDN…TPDE. The WSXWS motif motif lies at 415-419; sequence WSEWS. Residues Asn446 and Asn580 are each glycosylated (N-linked (GlcNAc...) asparagine). Residues 741–761 form a helical membrane-spanning segment; it reads LIHILLPMVFCVLLIMVMCYL. At 762-979 the chain is on the cytoplasmic side; that stretch reads KSQWIKETCY…TLLDPGEHYC (218 aa). The short motif at 770-778 is the Box 1 motif element; it reads CYPDIPDPY. Ser826 and Ser889 each carry phosphoserine.

This sequence belongs to the type I cytokine receptor family. Type 2 subfamily. In terms of assembly, heterodimer composed of OSMR and IL6ST (type II OSM receptor). Heterodimer with IL31RA to form the IL31 receptor. As to expression, expressed in keratinocytes (at protein level). Expressed at relatively high levels in all neural cells as well as fibroblast and epithelial cells.

The protein resides in the membrane. In terms of biological role, associates with IL31RA to form the IL31 receptor. Binds IL31 to activate STAT3 and possibly STAT1 and STAT5. Capable of transducing OSM-specific signaling events. This is Oncostatin-M-specific receptor subunit beta (OSMR) from Homo sapiens (Human).